A 442-amino-acid polypeptide reads, in one-letter code: MSHEGEEDLLEYSDNEQEIQVDATNINESAVDATVSETAEGATTDSEKKGSYVGIHSTGFKDFLLKPELARAIIDCGFEHPSEVQQHTIPQSIHGTDVLCQAKSGLGKTAVFVLSTLQQLDPVPGEVSVVVICNARELAYQIRNEYLRFSKYMPDVKTAVFYGGTPITKDAELLKNKETAPHIVVATPGRLKALVRDKLIDLSHVKNFVIDECDKVLEELDMRRDVQDIFRATPRDKQVMMFSATLSEEIRPICRRFLQNPLEIFVDDEAKLTLHGLQQYYIKLQENEKNRKLAQLLDDLEFNQVIIFVKSTKRANELTKLLNESNFPAITVHGNMKQAERIARYKAFKEFEKRICVSTDVFGRGIDIERINLAINYDLTTEADQYLHRVGRAGRFGTKGLAISFVSSPEDEEVLGKIQERFDVKIAEFPEEGIDPSTYLNN.

Positions 58–86 match the Q motif motif; it reads TGFKDFLLKPELARAIIDCGFEHPSEVQQ. Positions 89 to 264 constitute a Helicase ATP-binding domain; sequence IPQSIHGTDV…RRFLQNPLEI (176 aa). 102–109 is an ATP binding site; it reads AKSGLGKT. The DECD box motif lies at 211 to 214; the sequence is DECD. Positions 292 to 437 constitute a Helicase C-terminal domain; sequence KLAQLLDDLE…EFPEEGIDPS (146 aa).

The protein belongs to the DEAD box helicase family. DECD subfamily.

The protein localises to the nucleus. The catalysed reaction is ATP + H2O = ADP + phosphate + H(+). Functionally, ATP-binding RNA helicase involved in transcription elongation and required for the export of mRNA out of the nucleus. SUB2 also plays a role in pre-mRNA splicing and spliceosome assembly. May be involved in rDNA and telomeric silencing, and maintenance of genome integrity. This is ATP-dependent RNA helicase SUB2-2 (SUB2-2) from Vanderwaltozyma polyspora (strain ATCC 22028 / DSM 70294 / BCRC 21397 / CBS 2163 / NBRC 10782 / NRRL Y-8283 / UCD 57-17) (Kluyveromyces polysporus).